A 119-amino-acid chain; its full sequence is Large ribosomal subunit protein eL31y (119 aa).

This sequence belongs to the eukaryotic ribosomal protein eL31 family.

This is Large ribosomal subunit protein eL31y (RPL31B) from Arabidopsis thaliana (Mouse-ear cress).